Here is a 1023-residue protein sequence, read N- to C-terminus: NLR family CARD domain-containing protein 4 (1023 aa).

Positions 1 to 88 (MNFIKENSQA…PVYQDLTGHS (88 aa)) constitute a CARD domain. A nucleotide-binding domain (NBD) region spans residues 95-298 (EEDLDVLAQS…HVGALTVEVG (204 aa)). One can recognise an NACHT domain in the interval 163–476 (SPCLIEGESG…VSKGNSYLKK (314 aa)). 169–176 (GESGKGKS) is an ATP binding site. The segment at 356 to 463 (AHTQTMLFQT…RLSSLLKSRE (108 aa)) is winged-helix domain (WHD). The residue at position 533 (Ser-533) is a Phosphoserine. LRR repeat units follow at residues 578–598 (FFQGKSLYINSENIPDYLFDF), 655–678 (MQKFKTLEVTLRDISKLNKQDIKY), 734–757 (VTDLQNLSIHDLHTQRLPGGLADS), 761–784 (LKNLLKLILDDIRLNEEDAKSLAE), 786–811 (LRNLKKMRLLHLTRLSDMGEGMDYIV), 823–846 (EMKLVDCCLTANSLKILAQNLHNL), 847–869 (VKLSVLDMSENYLEKAGSEALQG), 877–901 (LEQLSALMLPWCWDAYISLPNLLKQ), 910–932 (KLGLKNWRLRDEEIRSFGEFLEM), 935–962 (LRDLQQLDLAGHGVSSDGWLSFMDVFEN), 964–984 (KQLVFFDFGTEEFLPDAALVR), and 998–1020 (EARLTGWELDDYDISVIKGTFKL).

As to quaternary structure, homooligomer; homooligomerizes following activation of Naip proteins by pathogenic proteins such as S.typhimurium (Salmonella) flagellin or PrgJ. Component of the NLRC4 inflammasome, at least composed of NLRC4, caspase-1 (CASP1) and some NAIP family member. Interacts with EIF2AK2/PKR. In terms of processing, phosphorylated at Ser-533 following infection of macrophages with S.typhimurium (Salmonella). Phosphorylation is essential for NLRC4 inflammasome function to promote caspase-1 activation and pyroptosis. PRKCD phosphorylates Ser-533 in vitro.

The protein resides in the cytoplasm. Its subcellular location is the cytosol. In terms of biological role, key component of inflammasomes that indirectly senses specific proteins from pathogenic bacteria and fungi and responds by assembling an inflammasome complex that promotes caspase-1 activation, cytokine production and macrophage pyroptosis. The NLRC4 inflammasome is activated as part of the innate immune response to a range of intracellular bacteria. The protein is NLR family CARD domain-containing protein 4 (Nlrc4) of Rattus norvegicus (Rat).